A 606-amino-acid chain; its full sequence is Putative helicase 172L (606 aa).

Residues 59–264 (GEKTWGVRGG…WAQLRFCGYK (206 aa)) enclose the Helicase ATP-binding domain. Residue 72–79 (LCMGLGKT) participates in ATP binding. The Helicase C-terminal domain occupies 437–586 (YIKSSNFEIS…ASYLEGKERI (150 aa)).

It belongs to the SNF2/RAD54 helicase family.

The chain is Putative helicase 172L from Invertebrate iridescent virus 6 (IIV-6).